A 690-amino-acid chain; its full sequence is Potassium-transporting ATPase ATP-binding subunit (690 aa).

The next 4 helical transmembrane spans lie at 49–69 (SPVMLVVELTAVLTTLLCFVP), 72–92 (AVPTSVALQIALWLWFTVLFA), 229–249 (VALDILLIGLTLIFLLVVVTL), and 253–273 (ALFAGGNLPLVFLVALLVTLI). Residue Asp-317 is the 4-aspartylphosphate intermediate of the active site. ATP-binding positions include Asp-354, Glu-358, 385 to 392 (FSAETRLS), and Lys-403. 2 residues coordinate Mg(2+): Asp-526 and Asp-530. A run of 3 helical transmembrane segments spans residues 596-616 (FAILPALFVGIYPQLDVLNVM), 624-644 (AILSAIVFNALIIVALIPLAL), and 662-682 (LLIYGVGGLVAPFLGIKAIDL).

Belongs to the cation transport ATPase (P-type) (TC 3.A.3) family. Type IA subfamily. The system is composed of three essential subunits: KdpA, KdpB and KdpC.

The protein localises to the cell inner membrane. It carries out the reaction K(+)(out) + ATP + H2O = K(+)(in) + ADP + phosphate + H(+). Functionally, part of the high-affinity ATP-driven potassium transport (or Kdp) system, which catalyzes the hydrolysis of ATP coupled with the electrogenic transport of potassium into the cytoplasm. This subunit is responsible for energy coupling to the transport system and for the release of the potassium ions to the cytoplasm. This chain is Potassium-transporting ATPase ATP-binding subunit, found in Pseudomonas aeruginosa (strain ATCC 15692 / DSM 22644 / CIP 104116 / JCM 14847 / LMG 12228 / 1C / PRS 101 / PAO1).